The primary structure comprises 407 residues: Glucose-1-phosphate adenylyltransferase 2 (407 aa).

Alpha-D-glucose 1-phosphate-binding positions include Tyr-97, Gly-162, 177 to 178 (EK), and Ser-195.

It belongs to the bacterial/plant glucose-1-phosphate adenylyltransferase family. In terms of assembly, homotetramer.

The catalysed reaction is alpha-D-glucose 1-phosphate + ATP + H(+) = ADP-alpha-D-glucose + diphosphate. It functions in the pathway glycan biosynthesis; glycogen biosynthesis. Its function is as follows. Involved in the biosynthesis of ADP-glucose, a building block required for the elongation reactions to produce glycogen. Catalyzes the reaction between ATP and alpha-D-glucose 1-phosphate (G1P) to produce pyrophosphate and ADP-Glc. In Vibrio cholerae serotype O1 (strain ATCC 39315 / El Tor Inaba N16961), this protein is Glucose-1-phosphate adenylyltransferase 2.